A 632-amino-acid chain; its full sequence is tRNA uridine 5-carboxymethylaminomethyl modification enzyme MnmG (632 aa).

Residue 15–20 (GAGHAG) coordinates FAD. A disordered region spans residues 205 to 231 (PRVDGNTIDYSKTQEEPGDKEPRHFSY). Basic and acidic residues predominate over residues 216 to 228 (KTQEEPGDKEPRH). NAD(+) is bound at residue 276–290 (GPRYCPSIEDKVVRF).

Belongs to the MnmG family. Homodimer. Heterotetramer of two MnmE and two MnmG subunits. FAD is required as a cofactor.

It localises to the cytoplasm. In terms of biological role, NAD-binding protein involved in the addition of a carboxymethylaminomethyl (cmnm) group at the wobble position (U34) of certain tRNAs, forming tRNA-cmnm(5)s(2)U34. The sequence is that of tRNA uridine 5-carboxymethylaminomethyl modification enzyme MnmG from Lactobacillus johnsonii (strain CNCM I-12250 / La1 / NCC 533).